The following is a 145-amino-acid chain: Putative transcriptional regulatory protein PYRAB13000 (145 aa).

This sequence belongs to the Tfx family.

In terms of biological role, putative transcriptional regulator. This Pyrococcus abyssi (strain GE5 / Orsay) protein is Putative transcriptional regulatory protein PYRAB13000.